Reading from the N-terminus, the 643-residue chain is Thread biopolymer filament subunit alpha (643 aa).

Residues 1 to 13 (MSISQTVSKSYTK) show a composition bias toward polar residues. The interval 1-34 (MSISQTVSKSYTKSVSRGGQGVSYSQSSSHKVGG) is disordered. The head stretch occupies residues 1–191 (MSISQTVSKS…PDTVQHTRIR (191 aa)). Positions 14 to 31 (SVSRGGQGVSYSQSSSHK) are enriched in low complexity. Positions 192-510 (EKQDLQTLNT…KLLDSEETRI (319 aa)) constitute an IF rod domain. A coil 1A region spans residues 193-227 (KQDLQTLNTKFANLVDQVRTLEQHNAILKAQISMI). The tract at residues 228–240 (TSPSDTPEGPVNT) is linker 1. A coil 1B region spans residues 241 to 341 (AVVASTVTAT…YNARVREVQA (101 aa)). The tract at residues 342–362 (AVTGGPTAAYSIRVDNTHQAI) is linker 12. The interval 363-381 (DLTTSLQEMKTHYEVLATK) is coil 2A. The interval 382–389 (SREEAFTQ) is linker 2. The coil 2B stretch occupies residues 390–510 (VQPRIQEMAV…KLLDSEETRI (121 aa)). Residues 511-643 (SHGGGITITT…SSARSSSRIY (133 aa)) form a tail region. The segment at 622-643 (SRAGYSASRKSYSSARSSSRIY) is disordered.

The protein belongs to the intermediate filament family. In terms of assembly, coiled-coil heterodimer of an alpha and a gamma subunit. Assemble into 10 nm filaments. Forms a massive, conical, intermediate filament biopolymer of approximately 60 cm.

It is found in the secreted. It localises to the extracellular space. Its function is as follows. Released extracellularly into seawater and provides physical and biological defense against invasive organism by modulation of the viscoelastic properties of mucus. This Eptatretus stoutii (Pacific hagfish) protein is Thread biopolymer filament subunit alpha.